A 35-amino-acid polypeptide reads, in one-letter code: Potassium channel toxin alpha-KTx 6.1 (35 aa).

Disulfide bonds link C4–C25, C10–C30, C14–C32, and C20–C35.

The protein belongs to the short scorpion toxin superfamily. Potassium channel inhibitor family. Alpha-KTx 06 subfamily. Expressed by the venom gland.

It is found in the secreted. In terms of biological role, potently and reversibly inhibits the insect voltage-gated Shaker (Sh) potassium channel (isoform alpha (B)), the mammalian voltage-gated potassium channels Kv1.2/KCNA2 (IC(50)=0.44 nM), and the calcium-activated potassium channel KCa2.3/KCNN3 (Kd=330 nM). Its effect on Kv1.3/KCNA3 is controversial, since this channel is voltage-independently inhibited in PubMed:9464266, but is not affected in PubMed:10931199. Furthermore, this toxin competes with apamin (a small conductance calcium-activated potassium channel inhibitor) for binding to rat brain synaptosomes. The chain is Potassium channel toxin alpha-KTx 6.1 from Pandinus imperator (Emperor scorpion).